We begin with the raw amino-acid sequence, 459 residues long: Neuronal acetylcholine receptor subunit beta-2 (459 aa).

The Extracellular portion of the chain corresponds to 1 to 203 (LRSDFLLGPE…ITYDFVIKRK (203 aa)). N-linked (GlcNAc...) asparagine glycosylation is found at Asn21 and Asn138. An intrachain disulfide couples Cys125 to Cys139. The chain crosses the membrane as a helical span at residues 204-228 (PLFYTINLIIPCVLITSLAILVFYL). At 229 to 235 (PSDCGEK) the chain is on the cytoplasmic side. A helical membrane pass occupies residues 236 to 254 (VTLCMSVLLALTVFLLLIS). Residues 255-269 (KIVPPTSLAVPLIGK) are Extracellular-facing. Residues 270-291 (YLMFTMVLVTFSIVTSVCVLNV) form a helical membrane-spanning segment. The Cytoplasmic segment spans residues 292 to 421 (HHRSPSTHYM…WKYVAMVIDR (130 aa)). Residues 422–440 (LFLWIFILVCVVGTLGLFV) form a helical membrane-spanning segment.

Belongs to the ligand-gated ion channel (TC 1.A.9) family. Acetylcholine receptor (TC 1.A.9.1) subfamily. Beta-2/CHRNB2 sub-subfamily. As to quaternary structure, neuronal AChR is a heteropentamer composed of two different types of subunits: alpha and beta. CHRNB2/Beta-2 subunit can be combined to CHRNA2/alpha-2, CHRNA3/alpha-3 or CHRNA4/alpha-4, CHRNA5/alpha-5, CHRNA6/alpha-6 and CHRNB3/beta-3 to give rise to functional receptors.

The protein localises to the synaptic cell membrane. It is found in the cell membrane. The enzyme catalyses Ca(2+)(in) = Ca(2+)(out). It catalyses the reaction K(+)(in) = K(+)(out). It carries out the reaction Na(+)(in) = Na(+)(out). Activated by a myriad of ligands such as acetylcholine, cytisine, nicotine, choline and epibatidine. nAChR activity is inhibited by the antagonist alpha-conotoxins BuIA, PnIA, PnIC, GID and MII, small disulfide-constrained peptides from cone snails. Component of neuronal acetylcholine receptors (nAChRs) that function as pentameric, ligand-gated cation channels with high calcium permeability among other activities. nAChRs are excitatory neurotrasnmitter receptors formed by a collection of nAChR subunits known to mediate synaptic transmission in the nervous system and the neuromuscular junction. Each nAchR subunit confers differential attributes to channel properties, including activation, deactivation and desensitization kinetics, pH sensitivity, cation permeability, and binding to allosteric modulators. CHRNB2 forms heteropentameric neuronal acetylcholine receptors with CHRNA2, CHRNA3, CHRNA4 and CHRNA6, as well as CHRNA5 and CHRNB3 as accesory subunits. The protein is Neuronal acetylcholine receptor subunit beta-2 (chrnb2) of Carassius auratus (Goldfish).